The chain runs to 309 residues: Probable HTH-type transcriptional regulator LtrA (309 aa).

The region spanning 1 to 61 (MNLNLLPDLA…QRTTRKLRLS (61 aa)) is the HTH lysR-type domain. Positions 21-40 (FSAVARQNGITPSAVSRSVS) form a DNA-binding region, H-T-H motif.

Belongs to the LysR transcriptional regulatory family.

This is Probable HTH-type transcriptional regulator LtrA (ltrA) from Klebsiella pneumoniae.